We begin with the raw amino-acid sequence, 79 residues long: Small ribosomal subunit protein bS18 (79 aa).

It belongs to the bacterial ribosomal protein bS18 family. As to quaternary structure, part of the 30S ribosomal subunit. Forms a tight heterodimer with protein bS6.

Its function is as follows. Binds as a heterodimer with protein bS6 to the central domain of the 16S rRNA, where it helps stabilize the platform of the 30S subunit. The chain is Small ribosomal subunit protein bS18 from Rhodopseudomonas palustris (strain HaA2).